A 640-amino-acid chain; its full sequence is Leucine-rich repeat-containing protein 4C (640 aa).

An N-terminal signal peptide occupies residues 1–44 (MLNKMTLHPQQIMIGPRFNRALFDPLLVVLLALQLLVVAGLVRA). Residues 45 to 76 (QTCPSVCSCSNQFSKVICVRKNLREVPDGIST) form the LRRNT domain. LRR repeat units lie at residues 77–98 (NTRLLNLHENQIQIIKVNSFKH), 101–122 (HLEILQLSRNHIRTIEIGAFNG), 125–146 (NLNTLELFDNRLTTIPNGAFVY), 149–170 (KLKELWLRNNPIESIPSYAFNR), 173–195 (SLRRLDLGELKRLSYISEGAFEG), 198–219 (NLRYLNLAMCNLREIPNLTPLI), 220–241 (KLDELDLSGNHLSAIRPGSFQG), 244–265 (HLQKLWMIQSQIQVIERNAFDN), and 268–289 (SLVEINLAHNNLTLLPHDLFTP). The region spanning 301-353 (NPWNCNCDILWLSWWIKDMAPSNTACCARCNTPPNLKGRYIGELDQNYFTCYA) is the LRRCT domain. Residues 354–442 (PVIVEPPADL…GNTTASATLN (89 aa)) form the Ig-like C2-type domain. An intrachain disulfide couples Cys-375 to Cys-426. The tract at residues 463–483 (EPSQDEARTTDNNVGPTPVVD) is disordered. The chain crosses the membrane as a helical span at residues 528 to 548 (IIIGCFVAITLMAAVMLVIFY). Position 631 is a phosphoserine (Ser-631).

Interacts with NTNG1 and WHRN. Highly expressed in the cerebral cortex, including frontal, parietal and occipital lobes. Putamen, amygdala, hippocampus and medulla oblongata show moderate expression. Caudate nucleus and thalamus express small amounts, whereas other brain regions show very weak or no expression.

It localises to the postsynaptic cell membrane. In terms of biological role, may promote neurite outgrowth of developing thalamic neurons. The chain is Leucine-rich repeat-containing protein 4C (LRRC4C) from Homo sapiens (Human).